The sequence spans 343 residues: UBP1-associated proteins 1A (343 aa).

The interval 1–61 (MAKTLDKSKK…SESDNEFDPE (61 aa)) is disordered. Residues 28–49 (NKQQQQPESSTPYSSSSSSSDS) are compositionally biased toward low complexity. Residues 50–61 (SDSESDNEFDPE) are compositionally biased toward acidic residues. Residues 104-181 (RKIFVYGLPW…RTATCQLASM (78 aa)) form the RRM domain. Residues 312 to 343 (STYPDSDAGGKRGTGKDSDAGGSSFHGYSNYS) are disordered. Residues 319–330 (AGGKRGTGKDSD) are compositionally biased toward basic and acidic residues.

As to quaternary structure, interacts with UBA1A, UBA2A, UBP1A, UBP1B and UBP1C.

Its subcellular location is the nucleus. Functionally, acts as a component of a complex regulating the turnover of mRNAs in the nucleus. Binds with high affinity to RNA molecules that contain U-rich sequences in 3'-UTRs. May function in complex with UBP1 and contribute to the stabilization of mRNAs in the nucleus. However, unlike UBP1, UBA1A does not stimulate pre-mRNA splicing. The sequence is that of UBP1-associated proteins 1A (UBA1A) from Arabidopsis thaliana (Mouse-ear cress).